Consider the following 435-residue polypeptide: 3-ketoacyl-CoA thiolase (435 aa).

Catalysis depends on C98, which acts as the Acyl-thioester intermediate. Active-site proton acceptor residues include H391 and C421.

Belongs to the thiolase-like superfamily. Thiolase family. As to quaternary structure, heterotetramer of two alpha chains (FadJ) and two beta chains (FadI).

The protein resides in the cytoplasm. It carries out the reaction an acyl-CoA + acetyl-CoA = a 3-oxoacyl-CoA + CoA. It participates in lipid metabolism; fatty acid beta-oxidation. Catalyzes the final step of fatty acid oxidation in which acetyl-CoA is released and the CoA ester of a fatty acid two carbons shorter is formed. The chain is 3-ketoacyl-CoA thiolase from Vibrio parahaemolyticus serotype O3:K6 (strain RIMD 2210633).